Reading from the N-terminus, the 146-residue chain is Anti-sigma F factor (146 aa).

It belongs to the anti-sigma-factor family.

The enzyme catalyses L-seryl-[protein] + ATP = O-phospho-L-seryl-[protein] + ADP + H(+). It catalyses the reaction L-threonyl-[protein] + ATP = O-phospho-L-threonyl-[protein] + ADP + H(+). In terms of biological role, binds to sigma F and blocks its ability to form an RNA polymerase holoenzyme (E-sigma F). Phosphorylates SpoIIAA on a serine residue. This phosphorylation may enable SpoIIAA to act as an anti-anti-sigma factor that counteracts SpoIIAB and thus releases sigma F from inhibition. The polypeptide is Anti-sigma F factor (Bacillus cereus (strain ATCC 14579 / DSM 31 / CCUG 7414 / JCM 2152 / NBRC 15305 / NCIMB 9373 / NCTC 2599 / NRRL B-3711)).